The primary structure comprises 111 residues: Large ribosomal subunit protein P2B (111 aa).

The tract at residues 62–111 (LASVPSGGAAAGGASASTGAAAGGAAEAEEEKEEEAKEESDDDMGFGLFD) is disordered. Positions 67 to 87 (SGGAAAGGASASTGAAAGGAA) are enriched in low complexity. The span at 88-105 (EAEEEKEEEAKEESDDDM) shows a compositional bias: acidic residues. Ser-101 is subject to Phosphoserine.

It belongs to the eukaryotic ribosomal protein P1/P2 family.

Plays an important role in the elongation step of protein synthesis. The polypeptide is Large ribosomal subunit protein P2B (RPP2B) (Candida albicans (Yeast)).